The following is a 525-amino-acid chain: Cytochrome P450 4V2 (525 aa).

Residues 13-33 form a helical membrane-spanning segment; it reads LLLWGAASAVSVAGATVLLNI. Glu-329 and Cys-467 together coordinate heme.

The protein belongs to the cytochrome P450 family. The cofactor is heme.

It localises to the endoplasmic reticulum membrane. The catalysed reaction is dodecanoate + reduced [NADPH--hemoprotein reductase] + O2 = 12-hydroxydodecanoate + oxidized [NADPH--hemoprotein reductase] + H2O + H(+). It carries out the reaction tetradecanoate + reduced [NADPH--hemoprotein reductase] + O2 = 14-hydroxytetradecanoate + oxidized [NADPH--hemoprotein reductase] + H2O + H(+). The enzyme catalyses hexadecanoate + reduced [NADPH--hemoprotein reductase] + O2 = 16-hydroxyhexadecanoate + oxidized [NADPH--hemoprotein reductase] + H2O + H(+). It catalyses the reaction (5Z,8Z,11Z,14Z,17Z)-eicosapentaenoate + reduced [NADPH--hemoprotein reductase] + O2 = 20-hydroxy-(5Z,8Z,11Z,14Z,17Z)-eicosapentaenoate + oxidized [NADPH--hemoprotein reductase] + H2O + H(+). The catalysed reaction is (4Z,7Z,10Z,13Z,16Z,19Z)-docosahexaenoate + reduced [NADPH--hemoprotein reductase] + O2 = 22-hydroxy-(4Z,7Z,10Z,13Z,16Z,19Z)-docosahexaenoate + oxidized [NADPH--hemoprotein reductase] + H2O + H(+). The protein operates within lipid metabolism; fatty acid metabolism. With respect to regulation, inhibited by N-hydroxy-N'-(4-n-butyl-2-methylphenyl formamidine)(HET0016) with an IC(50) of 38 nM. Its function is as follows. A cytochrome P450 monooxygenase involved in fatty acid metabolism in the eye. Catalyzes the omega-hydroxylation of polyunsaturated fatty acids (PUFAs) docosahexaenoate (DHA) and its precursor eicosapentaenoate (EPA), and may contribute to the homeostasis of these retinal PUFAs. Omega hydroxylates saturated fatty acids such as laurate, myristate and palmitate, the catalytic efficiency decreasing in the following order: myristate &gt; laurate &gt; palmitate (C14&gt;C12&gt;C16). Mechanistically, uses molecular oxygen inserting one oxygen atom into a substrate, and reducing the second into a water molecule, with two electrons provided by NADPH via cytochrome P450 reductase (CPR; NADPH-ferrihemoprotein reductase). The polypeptide is Cytochrome P450 4V2 (Cyp4v2) (Rattus norvegicus (Rat)).